A 314-amino-acid polypeptide reads, in one-letter code: DNA topoisomerase 1B (314 aa).

The 238-residue stretch at 77-314 (VQNRNAKRDR…VDHVKSSTDG (238 aa)) folds into the Topo IB-type catalytic domain. Tyr-274 acts as the O-(3'-phospho-DNA)-tyrosine intermediate in catalysis.

Belongs to the type IB topoisomerase family.

It carries out the reaction ATP-independent breakage of single-stranded DNA, followed by passage and rejoining.. Releases the supercoiling and torsional tension of DNA introduced during the DNA replication and transcription by transiently cleaving and rejoining one strand of the DNA duplex. Introduces a single-strand break via transesterification at the specific target site 5'-[CT]CCTTp site in duplex DNA. The scissile phosphodiester is attacked by the catalytic tyrosine of the enzyme, resulting in the formation of a DNA-(3'-phosphotyrosyl)-enzyme intermediate and the expulsion of a 5'-OH DNA strand. The free DNA strand then undergoes passage around the unbroken strand thus removing DNA supercoils. Finally, in the religation step, the DNA 5'-OH attacks the covalent intermediate to expel the active-site tyrosine and restore the DNA phosphodiester backbone. The polypeptide is DNA topoisomerase 1B (TOP1) (Vaccinia virus (strain Ankara) (VACV)).